Here is a 345-residue protein sequence, read N- to C-terminus: NADH-quinone oxidoreductase subunit H (345 aa).

8 consecutive transmembrane segments (helical) span residues 9 to 29, 82 to 102, 108 to 128, 154 to 174, 183 to 203, 241 to 261, 282 to 302, and 325 to 345; these read ALGA…LVFA, VVMV…EGVV, VGVI…TLAG, MGLA…MEIV, LLGW…VTAF, YVNW…GYLV, LLQF…FIWV, and IALA…AVGL.

Belongs to the complex I subunit 1 family. As to quaternary structure, NDH-1 is composed of 14 different subunits. Subunits NuoA, H, J, K, L, M, N constitute the membrane sector of the complex.

It is found in the cell inner membrane. It carries out the reaction a quinone + NADH + 5 H(+)(in) = a quinol + NAD(+) + 4 H(+)(out). In terms of biological role, NDH-1 shuttles electrons from NADH, via FMN and iron-sulfur (Fe-S) centers, to quinones in the respiratory chain. The immediate electron acceptor for the enzyme in this species is believed to be ubiquinone. Couples the redox reaction to proton translocation (for every two electrons transferred, four hydrogen ions are translocated across the cytoplasmic membrane), and thus conserves the redox energy in a proton gradient. This subunit may bind ubiquinone. This is NADH-quinone oxidoreductase subunit H from Salinibacter ruber (strain DSM 13855 / M31).